Here is a 236-residue protein sequence, read N- to C-terminus: Uridylate kinase (236 aa).

10-13 (KLSG) contributes to the ATP binding site. Gly-52 lines the UMP pocket. 2 residues coordinate ATP: Gly-53 and Arg-57. Residues Asp-72 and 133 to 140 (TGNPFFTT) contribute to the UMP site. Residues Thr-160, Tyr-166, and Asp-169 each contribute to the ATP site.

It belongs to the UMP kinase family. In terms of assembly, homohexamer.

Its subcellular location is the cytoplasm. It catalyses the reaction UMP + ATP = UDP + ADP. Its pathway is pyrimidine metabolism; CTP biosynthesis via de novo pathway; UDP from UMP (UMPK route): step 1/1. With respect to regulation, inhibited by UTP. In terms of biological role, catalyzes the reversible phosphorylation of UMP to UDP. The polypeptide is Uridylate kinase (Parabacteroides distasonis (strain ATCC 8503 / DSM 20701 / CIP 104284 / JCM 5825 / NCTC 11152)).